A 115-amino-acid polypeptide reads, in one-letter code: Vespryn (115 aa).

A signal peptide spans 1–15; sequence MTWLLLCLLAQYENG. Residues 22 to 115 enclose the B30.2/SPRY domain; the sequence is SSSAKPYKTS…VKRKDHLRLT (94 aa).

The protein belongs to the ohanin/vespryn family. In terms of tissue distribution, expressed by the venom gland.

It localises to the secreted. Functionally, neurotoxin that produces dose-dependent hypolocomotion and hyperalgesia in mice. May directly act on the central nervous system, as it is 6500-fold more potent when administered intracerebroventricularly than intraperitoneal. This is Vespryn from Pogona barbata (Bearded dragon).